A 124-amino-acid chain; its full sequence is UPF0102 protein Mmc1_3298 (124 aa).

This sequence belongs to the UPF0102 family.

The chain is UPF0102 protein Mmc1_3298 from Magnetococcus marinus (strain ATCC BAA-1437 / JCM 17883 / MC-1).